The chain runs to 421 residues: MNTLQRRKTHQVRIDHITVGSEAPVVIQSMTNTDTADAKATALQIKELSDAGSEMVRITVNSPEAASKVAEIRRRLDDMGYATPLIGDFHFNGERLLAEFPECGKALSKYRINPGNVGKGVKGDEKFAFMIRTAAENDKAVRIGVNWGSLDQSLAKRMMDANLASSAPKPPEEVTKEALIVSALESAEKAVLLGLPEDKIILSCKVSAVQDLIQVYRELGSRCAYPLHLGLTEAGMGSKGIVASTAALSVLLQEGIGDTIRISLTPEPGSPRTQEVVVGQEILQTMGLRSFTPMVTACPGCGRTTSTVFQELAQDVQNYLRQKMSIWRTLYPGVESLNVAVMGCVVNGPGESKLADIGISLPGTGETPVAPVYVDGERKITLKGDNIATEFLAIVEEYVKTNYGENGSKRNQNKIIPIQSL.

Cysteine 298, cysteine 301, cysteine 344, and glutamate 351 together coordinate [4Fe-4S] cluster.

This sequence belongs to the IspG family. [4Fe-4S] cluster is required as a cofactor.

It catalyses the reaction (2E)-4-hydroxy-3-methylbut-2-enyl diphosphate + oxidized [flavodoxin] + H2O + 2 H(+) = 2-C-methyl-D-erythritol 2,4-cyclic diphosphate + reduced [flavodoxin]. It functions in the pathway isoprenoid biosynthesis; isopentenyl diphosphate biosynthesis via DXP pathway; isopentenyl diphosphate from 1-deoxy-D-xylulose 5-phosphate: step 5/6. Converts 2C-methyl-D-erythritol 2,4-cyclodiphosphate (ME-2,4cPP) into 1-hydroxy-2-methyl-2-(E)-butenyl 4-diphosphate. This is 4-hydroxy-3-methylbut-2-en-1-yl diphosphate synthase (flavodoxin) from Neisseria meningitidis serogroup C / serotype 2a (strain ATCC 700532 / DSM 15464 / FAM18).